The following is a 551-amino-acid chain: (6-4)DNA photolyase (551 aa).

The region spanning 13 to 157 is the Photolyase/cryptochrome alpha/beta domain; it reads AAAMVWFRKG…DVFSPVSHTL (145 aa). Phosphate is bound at residue glutamate 254. FAD is bound by residues lysine 255, 268–272, 309–313, 372–375, arginine 378, 407–409, and asparagine 413; these read TTVLS, QLLWR, WMHH, and DSD. Tryptophan 312 provides a ligand contact to DNA. Positions 374-379 are interaction with DNA; the sequence is HHLARH. Tryptophan 419 serves as a coordination point for DNA. Residues 508 to 551 are disordered; the sequence is YASNRLDDDKPDKGKSSNSSRRKLSAGSQVTPNSSKTKQLKRSS. Residues 512-522 show a composition bias toward basic and acidic residues; that stretch reads RLDDDKPDKGK. Polar residues predominate over residues 533–544; it reads AGSQVTPNSSKT.

The protein belongs to the DNA photolyase class-1 family. It depends on FAD as a cofactor.

The catalysed reaction is (6-4) photoproduct (in DNA) = 2 pyrimidine residues (in DNA).. Functionally, involved in repair of UV radiation-induced DNA damage. Catalyzes the photoreactivation of pyrimidine [6-4] pyrimidone photoproduct (6-4 products). This chain is (6-4)DNA photolyase (UVR3), found in Oryza sativa subsp. japonica (Rice).